A 101-amino-acid polypeptide reads, in one-letter code: Putative membrane protein insertion efficiency factor (101 aa).

This sequence belongs to the UPF0161 family.

It is found in the cell membrane. Functionally, could be involved in insertion of integral membrane proteins into the membrane. The polypeptide is Putative membrane protein insertion efficiency factor (Lacticaseibacillus casei (strain BL23) (Lactobacillus casei)).